Here is a 298-residue protein sequence, read N- to C-terminus: tRNA pseudouridine synthase A (298 aa).

Asp-56 (nucleophile) is an active-site residue. Tyr-125 contributes to the substrate binding site.

Belongs to the tRNA pseudouridine synthase TruA family. In terms of assembly, homodimer.

It carries out the reaction uridine(38/39/40) in tRNA = pseudouridine(38/39/40) in tRNA. Functionally, formation of pseudouridine at positions 38, 39 and 40 in the anticodon stem and loop of transfer RNAs. The polypeptide is tRNA pseudouridine synthase A (Bifidobacterium animalis subsp. lactis (strain AD011)).